The following is a 274-amino-acid chain: Large ribosomal subunit protein uL2 (274 aa).

Residues 222–274 (GVAMNPVDHPHGGGEGRGKGHHPQSPWGQLAKGYKTRRGKKASDKLIVRRRNG) form a disordered region. Residues 229 to 239 (DHPHGGGEGRG) show a composition bias toward basic and acidic residues.

The protein belongs to the universal ribosomal protein uL2 family. As to quaternary structure, part of the 50S ribosomal subunit. Forms a bridge to the 30S subunit in the 70S ribosome.

One of the primary rRNA binding proteins. Required for association of the 30S and 50S subunits to form the 70S ribosome, for tRNA binding and peptide bond formation. It has been suggested to have peptidyltransferase activity; this is somewhat controversial. Makes several contacts with the 16S rRNA in the 70S ribosome. The protein is Large ribosomal subunit protein uL2 of Thermosipho melanesiensis (strain DSM 12029 / CIP 104789 / BI429).